We begin with the raw amino-acid sequence, 412 residues long: Thyroxine-binding globulin (412 aa).

The N-terminal stretch at 1 to 16 is a signal peptide; it reads MPLFFSLVLLILGLHC. Asparagine 35, asparagine 98, asparagine 164, and asparagine 252 each carry an N-linked (GlcNAc...) asparagine glycan. Thyroxine is bound by residues asparagine 292 and lysine 395.

The protein belongs to the serpin family. In terms of tissue distribution, expressed by the liver and secreted in plasma.

It localises to the secreted. Functionally, major thyroid hormone transport protein in serum. The sequence is that of Thyroxine-binding globulin (SERPINA7) from Ovis aries (Sheep).